Consider the following 593-residue polypeptide: Epidermal growth factor receptor kinase substrate 8-like protein 3 (593 aa).

One can recognise a PTB domain in the interval 28 to 155 (QHRVEHLMTC…ALEEELEQRP (128 aa)). Disordered stretches follow at residues 149-171 (EELE…RGPA), 184-239 (LEPG…ERDE), and 374-451 (ADWT…PAQP). At Ser231 the chain carries Phosphoserine. Positions 386–401 (PTFSDDWQLPEPSSQA) are enriched in polar residues. Residues 425 to 435 (PQEKTHNHDPQ) are compositionally biased toward basic and acidic residues. In terms of domain architecture, SH3 spans 450-509 (QPALKMQVLYEFEARNPRELTVVQGEKLEVLDHSKRWWLVKNEAGRSGYIPSNILEPLQP).

The protein belongs to the EPS8 family. As to quaternary structure, interacts with ABI1. Part of a complex that contains SOS1, ABI1 and EPS8L2. Interacts with FASLG.

It is found in the cytoplasm. This chain is Epidermal growth factor receptor kinase substrate 8-like protein 3 (EPS8L3), found in Homo sapiens (Human).